The following is a 611-amino-acid chain: Dihydroxy-acid dehydratase (611 aa).

Residue Asp81 coordinates Mg(2+). Cys122 contributes to the [2Fe-2S] cluster binding site. 2 residues coordinate Mg(2+): Asp123 and Lys124. An N6-carboxylysine modification is found at Lys124. Cys195 contributes to the [2Fe-2S] cluster binding site. Position 491 (Glu491) interacts with Mg(2+). Ser517 acts as the Proton acceptor in catalysis.

Belongs to the IlvD/Edd family. As to quaternary structure, homodimer. [2Fe-2S] cluster serves as cofactor. It depends on Mg(2+) as a cofactor.

It catalyses the reaction (2R)-2,3-dihydroxy-3-methylbutanoate = 3-methyl-2-oxobutanoate + H2O. The enzyme catalyses (2R,3R)-2,3-dihydroxy-3-methylpentanoate = (S)-3-methyl-2-oxopentanoate + H2O. It participates in amino-acid biosynthesis; L-isoleucine biosynthesis; L-isoleucine from 2-oxobutanoate: step 3/4. It functions in the pathway amino-acid biosynthesis; L-valine biosynthesis; L-valine from pyruvate: step 3/4. Functionally, functions in the biosynthesis of branched-chain amino acids. Catalyzes the dehydration of (2R,3R)-2,3-dihydroxy-3-methylpentanoate (2,3-dihydroxy-3-methylvalerate) into 2-oxo-3-methylpentanoate (2-oxo-3-methylvalerate) and of (2R)-2,3-dihydroxy-3-methylbutanoate (2,3-dihydroxyisovalerate) into 2-oxo-3-methylbutanoate (2-oxoisovalerate), the penultimate precursor to L-isoleucine and L-valine, respectively. In Actinobacillus pleuropneumoniae serotype 5b (strain L20), this protein is Dihydroxy-acid dehydratase.